Reading from the N-terminus, the 571-residue chain is Urease subunit alpha (571 aa).

The 439-residue stretch at 133 to 571 (GGIDTHVHFI…LPLTQRYFLF (439 aa)) folds into the Urease domain. Ni(2+)-binding residues include His-138, His-140, and Lys-221. Lys-221 is modified (N6-carboxylysine). His-223 is a binding site for substrate. The Ni(2+) site is built by His-250 and His-276. The Proton donor role is filled by His-324. Asp-364 contacts Ni(2+).

The protein belongs to the metallo-dependent hydrolases superfamily. Urease alpha subunit family. Heterotrimer of UreA (gamma), UreB (beta) and UreC (alpha) subunits. Three heterotrimers associate to form the active enzyme. Ni cation is required as a cofactor. In terms of processing, carboxylation allows a single lysine to coordinate two nickel ions.

Its subcellular location is the cytoplasm. It catalyses the reaction urea + 2 H2O + H(+) = hydrogencarbonate + 2 NH4(+). It functions in the pathway nitrogen metabolism; urea degradation; CO(2) and NH(3) from urea (urease route): step 1/1. The polypeptide is Urease subunit alpha (Staphylococcus epidermidis (strain ATCC 35984 / DSM 28319 / BCRC 17069 / CCUG 31568 / BM 3577 / RP62A)).